We begin with the raw amino-acid sequence, 223 residues long: Mitochondrial cardiolipin hydrolase (223 aa).

Residues M1–S6 lie on the Mitochondrial intermembrane side of the membrane. Residues K7–V24 traverse the membrane as a helical segment. The Cytoplasmic portion of the chain corresponds to A25–K223. Positions T164 to A191 constitute a PLD phosphodiesterase domain. Catalysis depends on residues H169, K171, and D176.

It belongs to the phospholipase D family. MitoPLD/Zucchini subfamily. As to quaternary structure, homodimer.

Its subcellular location is the mitochondrion outer membrane. In terms of biological role, plays a critical role in PIWI-interacting RNA (piRNA) biogenesis. piRNAs provide essential protection against the activity of mobile genetic elements. piRNA-mediated transposon silencing is thus critical for maintaining genome stability. Backbone-non-specific, single strand-specific nuclease, cleaving either RNA or DNA substrates with similar affinity. Produces 5' phosphate and 3' hydroxyl termini, suggesting it could directly participate in the processing of primary piRNA transcripts. Has been proposed to act as a cardiolipin hydrolase to generate phosphatidic acid at mitochondrial surface. Although it cannot be excluded that it can act as a phospholipase in some circumstances, this activity could not be confirmed. The protein is Mitochondrial cardiolipin hydrolase of Chlamydomonas reinhardtii (Chlamydomonas smithii).